Here is a 485-residue protein sequence, read N- to C-terminus: MLDKMANENWPVYGEITGPVVMIGFGSIGRGTLPLIERHFKFDKSRMTVLDPRDTDRKLLDERGIAFVQEAVTENNYKKLLTPLLTNGGGQGFCVNLSVDTGSVDLMRLCRKLGVLYIDTVVEPWLGFYFDAKADNASRTNYALREAMIKEKHDKPGGATVVSTCGANPGMVSWFVKQALVNLATDLGLEFSEPAQEDREGWAKLMKKAGVKGIHIAERDTQRTKKPKPMDVFWNTWSVEGFISEGLQPAELGWGTHEKWMPKNGKKHKHGSKAAIYLEQPGANTRVRSWCPTPGAQYGLLVTHNEAISIADFFTVRSKKGKVQYRPTCHYAYHPSNDAMLSLDEMFGAAGKPQPVHHVLDENELVDGVDELGVLLYGHDKNAYWYGSQLSLAEARKLAPYQNATGMQVTSAVLAGMVWALENPDAGIVEADEMDYKRCLDVQSPYLGPVKGYYTDWTPLDRRPGLFPEDLDRSDPWQFRNILVR.

This sequence belongs to the saccharopine dehydrogenase family. NAD(+) is required as a cofactor.

It carries out the reaction 2 putrescine = sym-homospermidine + NH4(+). It catalyses the reaction putrescine + spermidine = sym-homospermidine + propane-1,3-diamine. Involved in the NAD(+)-dependent synthesis of the polyamine homospermidine from putrescine. The sequence is that of Homospermidine synthase (hss) from Mesorhizobium japonicum (strain LMG 29417 / CECT 9101 / MAFF 303099) (Mesorhizobium loti (strain MAFF 303099)).